The following is a 453-amino-acid chain: Cholecystokinin receptor (453 aa).

Residues M1–S64 are Extracellular-facing. N-linked (GlcNAc...) asparagine glycosylation is found at N9, N22, N30, N35, and N39. A helical transmembrane segment spans residues D65–V94. Over M95 to N104 the chain is Cytoplasmic. The chain crosses the membrane as a helical span at residues S105 to M131. Topologically, residues E132–R142 are extracellular. Residues C141 and C223 are joined by a disulfide bond. The helical transmembrane segment at A143 to I164 threads the bilayer. Residues E165–H184 are Cytoplasmic-facing. A helical membrane pass occupies residues A185–V205. The Extracellular segment spans residues Y206–Y237. The chain crosses the membrane as a helical span at residues V238 to R261. Residues E262–R343 are Cytoplasmic-facing. Residues M344–T364 form a helical membrane-spanning segment. Residues W365–G379 lie on the Extracellular side of the membrane. The chain crosses the membrane as a helical span at residues A380–M403. C401 carries S-palmitoyl cysteine lipidation. The Cytoplasmic portion of the chain corresponds to N404–A453.

Belongs to the G-protein coupled receptor 1 family. As to expression, brain and stomach.

It is found in the cell membrane. Functionally, receptor for cholecystokinin. This receptor mediates its action by association with G proteins that activate a phosphatidylinositol-calcium second messenger system. Has high affinity for CCK-8 and low affinities for gastrin-17-I, CCK-4, and unsulfated CCK-8. The protein is Cholecystokinin receptor (cckar) of Xenopus laevis (African clawed frog).